We begin with the raw amino-acid sequence, 438 residues long: sn-glycerol-3-phosphate-binding periplasmic protein UgpB (438 aa).

The N-terminal stretch at 1–23 (MKPLHYTASALALGLALMGNAQA) is a signal peptide. Sn-glycerol 3-phosphate contacts are provided by Y65, E89, S144, S270, G307, Y346, and R397.

The protein belongs to the bacterial solute-binding protein 1 family. In terms of assembly, the complex is composed of two ATP-binding proteins (UgpC), two transmembrane proteins (UgpA and UgpE) and a solute-binding protein (UgpB).

It localises to the periplasm. Part of the ABC transporter complex UgpBAEC involved in sn-glycerol-3-phosphate (G3P) import. Binds G3P. This is sn-glycerol-3-phosphate-binding periplasmic protein UgpB (ugpB) from Shigella flexneri.